We begin with the raw amino-acid sequence, 247 residues long: 2,3-bisphosphoglycerate-dependent phosphoglycerate mutase (247 aa).

Substrate-binding positions include 8–15, 21–22, Arg-60, 87–90, Lys-98, 114–115, and 183–184; these read RHGESQWN, TG, ERHY, RR, and GN. His-9 (tele-phosphohistidine intermediate) is an active-site residue. The active-site Proton donor/acceptor is Glu-87.

It belongs to the phosphoglycerate mutase family. BPG-dependent PGAM subfamily.

The catalysed reaction is (2R)-2-phosphoglycerate = (2R)-3-phosphoglycerate. Its pathway is carbohydrate degradation; glycolysis; pyruvate from D-glyceraldehyde 3-phosphate: step 3/5. Its function is as follows. Catalyzes the interconversion of 2-phosphoglycerate and 3-phosphoglycerate. This chain is 2,3-bisphosphoglycerate-dependent phosphoglycerate mutase, found in Chlorobaculum parvum (strain DSM 263 / NCIMB 8327) (Chlorobium vibrioforme subsp. thiosulfatophilum).